The following is a 483-amino-acid chain: tRNA-2-methylthio-N(6)-dimethylallyladenosine synthase (483 aa).

In terms of domain architecture, MTTase N-terminal spans 31 to 148 (KKLYIETQGC…LPQMLDQHHA (118 aa)). Residues cysteine 40, cysteine 77, cysteine 111, cysteine 192, cysteine 196, and cysteine 199 each contribute to the [4Fe-4S] cluster site. The 233-residue stretch at 178 to 410 (RVEGFKAFVS…QQVIKQSSIE (233 aa)) folds into the Radical SAM core domain. One can recognise a TRAM domain in the interval 413–477 (DAMLGKIERV…LNLVYGELLN (65 aa)).

This sequence belongs to the methylthiotransferase family. MiaB subfamily. In terms of assembly, monomer. The cofactor is [4Fe-4S] cluster.

It is found in the cytoplasm. It carries out the reaction N(6)-dimethylallyladenosine(37) in tRNA + (sulfur carrier)-SH + AH2 + 2 S-adenosyl-L-methionine = 2-methylsulfanyl-N(6)-dimethylallyladenosine(37) in tRNA + (sulfur carrier)-H + 5'-deoxyadenosine + L-methionine + A + S-adenosyl-L-homocysteine + 2 H(+). Its function is as follows. Catalyzes the methylthiolation of N6-(dimethylallyl)adenosine (i(6)A), leading to the formation of 2-methylthio-N6-(dimethylallyl)adenosine (ms(2)i(6)A) at position 37 in tRNAs that read codons beginning with uridine. The sequence is that of tRNA-2-methylthio-N(6)-dimethylallyladenosine synthase from Acinetobacter baumannii (strain ACICU).